A 61-amino-acid chain; its full sequence is Protein translocase subunit SecE (61 aa).

The chain crosses the membrane as a helical span at residues 39-59 (VGIIIIGLIGFILSIVSQVLF).

It belongs to the SecE/SEC61-gamma family. Component of the Sec protein translocase complex. Heterotrimer consisting of SecY (alpha), SecG (beta) and SecE (gamma) subunits. The heterotrimers can form oligomers, although 1 heterotrimer is thought to be able to translocate proteins. Interacts with the ribosome. May interact with SecDF, and other proteins may be involved.

Its subcellular location is the cell membrane. Its function is as follows. Essential subunit of the Sec protein translocation channel SecYEG. Clamps together the 2 halves of SecY. May contact the channel plug during translocation. The sequence is that of Protein translocase subunit SecE from Methanosphaera stadtmanae (strain ATCC 43021 / DSM 3091 / JCM 11832 / MCB-3).